The sequence spans 331 residues: Activator of 90 kDa heat shock protein ATPase homolog 2 (331 aa).

The protein belongs to the AHA1 family.

Co-chaperone that stimulates HSP90 ATPase activity. The polypeptide is Activator of 90 kDa heat shock protein ATPase homolog 2 (Ahsa2) (Mus musculus (Mouse)).